Here is an 874-residue protein sequence, read N- to C-terminus: Alanine--tRNA ligase (874 aa).

Zn(2+)-binding residues include histidine 563, histidine 567, cysteine 665, and histidine 669.

This sequence belongs to the class-II aminoacyl-tRNA synthetase family. It depends on Zn(2+) as a cofactor.

It is found in the cytoplasm. It catalyses the reaction tRNA(Ala) + L-alanine + ATP = L-alanyl-tRNA(Ala) + AMP + diphosphate. Catalyzes the attachment of alanine to tRNA(Ala) in a two-step reaction: alanine is first activated by ATP to form Ala-AMP and then transferred to the acceptor end of tRNA(Ala). Also edits incorrectly charged Ser-tRNA(Ala) and Gly-tRNA(Ala) via its editing domain. The chain is Alanine--tRNA ligase from Histophilus somni (strain 129Pt) (Haemophilus somnus).